Here is a 345-residue protein sequence, read N- to C-terminus: MGSNSSPPTVLQLCYENVTGSCVKTPYSPGSRVILYAVFGFGAVLAVFGNLMVMISILHFKQLHSPTNFLIASLACADFGVGISVMPFSMVRSIESCWYFGRSFCTFHTCCDVAFCYSSLFHLSFISIDRYIAVTDPLVYPTKFTVSVSGICIGVSWILPLVYSGAVFYTGVYDDGLEELSSALNCVGGCQVVVNQNWVLIDFLSFLIPTLVMIILYGNIFLVARQQAKKIENIGSKTESSSESYKARVARRERKAAKTLGITVVAFMISWLPYSIDSLVDAFMGFITPAYIYEICVWCAYYNSAMNPLIYALFYPWFKKAIKVIMSGQVFKNSSATMNLFSEQI.

The Extracellular portion of the chain corresponds to 1–32 (MGSNSSPPTVLQLCYENVTGSCVKTPYSPGSR). Asn17 carries an N-linked (GlcNAc...) asparagine glycan. 2 disulfides stabilise this stretch: Cys22–Cys186 and Cys105–Cys190. The helical transmembrane segment at 33–53 (VILYAVFGFGAVLAVFGNLMV) threads the bilayer. The Cytoplasmic portion of the chain corresponds to 54–68 (MISILHFKQLHSPTN). A helical membrane pass occupies residues 69-89 (FLIASLACADFGVGISVMPFS). Topologically, residues 90–107 (MVRSIESCWYFGRSFCTF) are extracellular. A helical membrane pass occupies residues 108–128 (HTCCDVAFCYSSLFHLSFISI). Residues 129–147 (DRYIAVTDPLVYPTKFTVS) lie on the Cytoplasmic side of the membrane. Residues 148-168 (VSGICIGVSWILPLVYSGAVF) traverse the membrane as a helical segment. Over 169–202 (YTGVYDDGLEELSSALNCVGGCQVVVNQNWVLID) the chain is Extracellular. Positions 174–187 (DDGLEELSSALNCV) are extracellular Loop 2 (ECL2). Residues 203–223 (FLSFLIPTLVMIILYGNIFLV) traverse the membrane as a helical segment. Residues 224 to 259 (ARQQAKKIENIGSKTESSSESYKARVARRERKAAKT) are Cytoplasmic-facing. The helical transmembrane segment at 260–276 (LGITVVAFMISWLPYSI) threads the bilayer. The Extracellular portion of the chain corresponds to 277-282 (DSLVDA). Residues 283–302 (FMGFITPAYIYEICVWCAYY) form a helical membrane-spanning segment. Over 303–345 (NSAMNPLIYALFYPWFKKAIKVIMSGQVFKNSSATMNLFSEQI) the chain is Cytoplasmic.

Belongs to the G-protein coupled receptor 1 family. As to expression, specifically expressed in neurons of the olfactory epithelium, to discrete glomeruli predominantly localized to a confined bulb region. Present in a ventral area of the main olfactory epithelium.

Its subcellular location is the cell membrane. In terms of biological role, olfactory receptor specific for trace amines, such as beta-phenylethylamine (beta-PEA). Trace amine compounds are enriched in animal body fluids and act on trace amine-associated receptors (TAARs) to elicit both intraspecific and interspecific innate behaviors. Beta-PEA-binding causes a conformation change that triggers signaling via G(s)-class of G alpha proteins (GNAL or GNAS). This chain is Trace amine-associated receptor 6, found in Mus musculus (Mouse).